The following is a 219-amino-acid chain: Sugar fermentation stimulation protein homolog (219 aa).

It belongs to the SfsA family.

The protein is Sugar fermentation stimulation protein homolog of Archaeoglobus fulgidus (strain ATCC 49558 / DSM 4304 / JCM 9628 / NBRC 100126 / VC-16).